The primary structure comprises 549 residues: Dihydroxy-acid dehydratase (549 aa).

D78 serves as a coordination point for Mg(2+). A [2Fe-2S] cluster-binding site is contributed by C119. Mg(2+)-binding residues include D120 and K121. K121 carries the post-translational modification N6-carboxylysine. Residue C192 coordinates [2Fe-2S] cluster. E439 provides a ligand contact to Mg(2+). Catalysis depends on S465, which acts as the Proton acceptor.

This sequence belongs to the IlvD/Edd family. In terms of assembly, homodimer. [2Fe-2S] cluster is required as a cofactor. Mg(2+) serves as cofactor.

It carries out the reaction (2R)-2,3-dihydroxy-3-methylbutanoate = 3-methyl-2-oxobutanoate + H2O. The catalysed reaction is (2R,3R)-2,3-dihydroxy-3-methylpentanoate = (S)-3-methyl-2-oxopentanoate + H2O. The protein operates within amino-acid biosynthesis; L-isoleucine biosynthesis; L-isoleucine from 2-oxobutanoate: step 3/4. Its pathway is amino-acid biosynthesis; L-valine biosynthesis; L-valine from pyruvate: step 3/4. Functionally, functions in the biosynthesis of branched-chain amino acids. Catalyzes the dehydration of (2R,3R)-2,3-dihydroxy-3-methylpentanoate (2,3-dihydroxy-3-methylvalerate) into 2-oxo-3-methylpentanoate (2-oxo-3-methylvalerate) and of (2R)-2,3-dihydroxy-3-methylbutanoate (2,3-dihydroxyisovalerate) into 2-oxo-3-methylbutanoate (2-oxoisovalerate), the penultimate precursor to L-isoleucine and L-valine, respectively. The polypeptide is Dihydroxy-acid dehydratase (Endomicrobium trichonymphae).